The primary structure comprises 309 residues: Taste receptor type 2 member 114 (309 aa).

At 1 to 7 (MLSTMEG) the chain is on the extracellular side. Residues 8-28 (VLLSVSTSEAVLGIVGNTFIA) form a helical membrane-spanning segment. The Cytoplasmic segment spans residues 29 to 43 (LVNCMDYNRNKKLSN). Residues 44 to 64 (IGFILTGLAISRICLVLILIT) form a helical membrane-spanning segment. Topologically, residues 65 to 87 (EAYIKIFYPQLLSPVNIIELISY) are extracellular. Residues 88–108 (LWIIICQLNVWFATSLSIFYF) form a helical membrane-spanning segment. At 109 to 127 (LKIANFSHYIFVWLKRRID) the chain is on the cytoplasmic side. The chain crosses the membrane as a helical span at residues 128-148 (LVFFFLIGCLLISWLFSFPVV). Topologically, residues 149–182 (AKMVKDNKMLYINTSWQIHMKKSELIINYVFTNG) are extracellular. N-linked (GlcNAc...) asparagine glycosylation is present at N161. The chain crosses the membrane as a helical span at residues 183–203 (GVFLFFMIMLIVCFLLIISLW). The Cytoplasmic segment spans residues 204 to 233 (RHRRQMESNKLGFRDLNTEVHVRTIKVLLS). Residues 234 to 254 (FIILFILHFMGITINVICLLI) form a helical membrane-spanning segment. Over 255 to 259 (PESNL) the chain is Extracellular. A helical membrane pass occupies residues 260–280 (LFMFGLTTAFIYPGCHSLILI). Topologically, residues 281–309 (LANSRLKQCSVMILQLLKCCENGKELRDT) are cytoplasmic.

This sequence belongs to the G-protein coupled receptor T2R family.

The protein resides in the membrane. Its function is as follows. Putative taste receptor which may play a role in the perception of bitterness. This chain is Taste receptor type 2 member 114, found in Mus musculus (Mouse).